The chain runs to 451 residues: Glyceraldehyde-3-phosphate dehydrogenase B, chloroplastic (451 aa).

A chloroplast-targeting transit peptide spans 1–83 (MASHAALAPS…AAPVRGETVA (83 aa)). Residues 94-95 (RI), Asp118, and Arg163 contribute to the NADP(+) site. D-glyceraldehyde 3-phosphate-binding positions include 237-239 (SCT), Thr268, Arg283, 296-297 (TG), and Arg319. Residue Cys238 is the Nucleophile of the active site. Asn402 provides a ligand contact to NADP(+).

It belongs to the glyceraldehyde-3-phosphate dehydrogenase family. As to quaternary structure, tetramer of either four A chains (GAPDH 2) or two A and two B chains (GAPDH 1).

Its subcellular location is the plastid. The protein resides in the chloroplast. It carries out the reaction D-glyceraldehyde 3-phosphate + phosphate + NADP(+) = (2R)-3-phospho-glyceroyl phosphate + NADPH + H(+). It participates in carbohydrate biosynthesis; Calvin cycle. This is Glyceraldehyde-3-phosphate dehydrogenase B, chloroplastic (GAPB) from Spinacia oleracea (Spinach).